Consider the following 758-residue polypeptide: Phosphoribosylformylglycinamidine synthase subunit PurL (758 aa).

Histidine 57 is an active-site residue. ATP is bound by residues tyrosine 60 and arginine 104. A Mg(2+)-binding site is contributed by glutamate 106. Substrate contacts are provided by residues 107 to 110 and arginine 129; that span reads SHNH. Residue histidine 108 is the Proton acceptor of the active site. Mg(2+) is bound at residue aspartate 130. Substrate is bound at residue glutamine 254. Aspartate 282 provides a ligand contact to Mg(2+). Substrate is bound at residue 326–328; sequence ESQ. Residues asparagine 509 and glycine 546 each coordinate ATP. Residue asparagine 547 coordinates Mg(2+). Position 549 (serine 549) interacts with substrate.

The protein belongs to the FGAMS family. As to quaternary structure, monomer. Part of the FGAM synthase complex composed of 1 PurL, 1 PurQ and 2 PurS subunits.

It localises to the cytoplasm. The catalysed reaction is N(2)-formyl-N(1)-(5-phospho-beta-D-ribosyl)glycinamide + L-glutamine + ATP + H2O = 2-formamido-N(1)-(5-O-phospho-beta-D-ribosyl)acetamidine + L-glutamate + ADP + phosphate + H(+). It functions in the pathway purine metabolism; IMP biosynthesis via de novo pathway; 5-amino-1-(5-phospho-D-ribosyl)imidazole from N(2)-formyl-N(1)-(5-phospho-D-ribosyl)glycinamide: step 1/2. Its function is as follows. Part of the phosphoribosylformylglycinamidine synthase complex involved in the purines biosynthetic pathway. Catalyzes the ATP-dependent conversion of formylglycinamide ribonucleotide (FGAR) and glutamine to yield formylglycinamidine ribonucleotide (FGAM) and glutamate. The FGAM synthase complex is composed of three subunits. PurQ produces an ammonia molecule by converting glutamine to glutamate. PurL transfers the ammonia molecule to FGAR to form FGAM in an ATP-dependent manner. PurS interacts with PurQ and PurL and is thought to assist in the transfer of the ammonia molecule from PurQ to PurL. The polypeptide is Phosphoribosylformylglycinamidine synthase subunit PurL (Corynebacterium ammoniagenes (Brevibacterium ammoniagenes)).